We begin with the raw amino-acid sequence, 212 residues long: MTKGILGRKVGMTQIFTKDGILVPVTVVEATPNVVMQVKTVESDGYEAVQLGYQDKREVLSNKPEKGHADKAKTSPKRFIREIRGVELKDYEVGSEVTVDTFKEGDVVNVTGTSRGHGYQGNIKRWGQSRGPETHGSRYHRIPGSMGSIINRVPKGKRLPGHMGVKKVTIENLVIEKVVADKNVLMIKGNVPGAKNSLIVVKTASKAVKADK.

The tract at residues 119 to 147 (YQGNIKRWGQSRGPETHGSRYHRIPGSMG) is disordered.

It belongs to the universal ribosomal protein uL3 family. Part of the 50S ribosomal subunit. Forms a cluster with proteins L14 and L19.

Its function is as follows. One of the primary rRNA binding proteins, it binds directly near the 3'-end of the 23S rRNA, where it nucleates assembly of the 50S subunit. This chain is Large ribosomal subunit protein uL3, found in Lactobacillus acidophilus (strain ATCC 700396 / NCK56 / N2 / NCFM).